Here is a 361-residue protein sequence, read N- to C-terminus: S-adenosylmethionine:tRNA ribosyltransferase-isomerase (361 aa).

Belongs to the QueA family. In terms of assembly, monomer.

Its subcellular location is the cytoplasm. It carries out the reaction 7-aminomethyl-7-carbaguanosine(34) in tRNA + S-adenosyl-L-methionine = epoxyqueuosine(34) in tRNA + adenine + L-methionine + 2 H(+). It functions in the pathway tRNA modification; tRNA-queuosine biosynthesis. Transfers and isomerizes the ribose moiety from AdoMet to the 7-aminomethyl group of 7-deazaguanine (preQ1-tRNA) to give epoxyqueuosine (oQ-tRNA). This is S-adenosylmethionine:tRNA ribosyltransferase-isomerase from Actinobacillus pleuropneumoniae serotype 7 (strain AP76).